We begin with the raw amino-acid sequence, 505 residues long: Aspartyl/glutamyl-tRNA(Asn/Gln) amidotransferase subunit B (505 aa).

It belongs to the GatB/GatE family. GatB subfamily. As to quaternary structure, heterotrimer of A, B and C subunits.

The enzyme catalyses L-glutamyl-tRNA(Gln) + L-glutamine + ATP + H2O = L-glutaminyl-tRNA(Gln) + L-glutamate + ADP + phosphate + H(+). It catalyses the reaction L-aspartyl-tRNA(Asn) + L-glutamine + ATP + H2O = L-asparaginyl-tRNA(Asn) + L-glutamate + ADP + phosphate + 2 H(+). Allows the formation of correctly charged Asn-tRNA(Asn) or Gln-tRNA(Gln) through the transamidation of misacylated Asp-tRNA(Asn) or Glu-tRNA(Gln) in organisms which lack either or both of asparaginyl-tRNA or glutaminyl-tRNA synthetases. The reaction takes place in the presence of glutamine and ATP through an activated phospho-Asp-tRNA(Asn) or phospho-Glu-tRNA(Gln). The sequence is that of Aspartyl/glutamyl-tRNA(Asn/Gln) amidotransferase subunit B from Haloarcula marismortui (strain ATCC 43049 / DSM 3752 / JCM 8966 / VKM B-1809) (Halobacterium marismortui).